We begin with the raw amino-acid sequence, 295 residues long: Pyridoxal 5'-phosphate synthase subunit PdxS (295 aa).

A D-ribose 5-phosphate-binding site is contributed by Asp25. The Schiff-base intermediate with D-ribose 5-phosphate role is filled by Lys82. Gly154 is a D-ribose 5-phosphate binding site. A D-glyceraldehyde 3-phosphate-binding site is contributed by Arg166. Residues Gly215 and 236-237 contribute to the D-ribose 5-phosphate site; that span reads GS.

It belongs to the PdxS/SNZ family. As to quaternary structure, in the presence of PdxT, forms a dodecamer of heterodimers.

It catalyses the reaction aldehydo-D-ribose 5-phosphate + D-glyceraldehyde 3-phosphate + L-glutamine = pyridoxal 5'-phosphate + L-glutamate + phosphate + 3 H2O + H(+). Its pathway is cofactor biosynthesis; pyridoxal 5'-phosphate biosynthesis. In terms of biological role, catalyzes the formation of pyridoxal 5'-phosphate from ribose 5-phosphate (RBP), glyceraldehyde 3-phosphate (G3P) and ammonia. The ammonia is provided by the PdxT subunit. Can also use ribulose 5-phosphate and dihydroxyacetone phosphate as substrates, resulting from enzyme-catalyzed isomerization of RBP and G3P, respectively. The sequence is that of Pyridoxal 5'-phosphate synthase subunit PdxS from Listeria monocytogenes serotype 4b (strain CLIP80459).